The following is an 843-amino-acid chain: Protein P (843 aa).

Residues 1–177 (MPLSYQHFRK…FCGSPYSWEQ (177 aa)) form a terminal protein domain (TP) region. Positions 178-346 (ELQHGRLVFQ…YCLTHIVNLL (169 aa)) are spacer. Disordered stretches follow at residues 220 to 273 (QSRL…SSTS) and 289 to 316 (LSTS…RSQS). Residues 289 to 299 (LSTSKRQSSSG) show a composition bias toward polar residues. The interval 347–690 (EDWGPCTEHG…YLNLYPVARQ (344 aa)) is polymerase/reverse transcriptase domain (RT). The Reverse transcriptase domain occupies 357-600 (EHNIRIPRTP…YSLNFMGYVI (244 aa)). Residues Asp-429, Asp-551, and Asp-552 each coordinate Mg(2+).

It belongs to the hepadnaviridae P protein family.

It catalyses the reaction DNA(n) + a 2'-deoxyribonucleoside 5'-triphosphate = DNA(n+1) + diphosphate. The catalysed reaction is Endonucleolytic cleavage to 5'-phosphomonoester.. Activated by host HSP70 and HSP40 in vitro to be able to bind the epsilon loop of the pgRNA. Because deletion of the RNase H region renders the protein partly chaperone-independent, the chaperones may be needed indirectly to relieve occlusion of the RNA-binding site by this domain. Inhibited by several reverse-transcriptase inhibitors: Lamivudine, Adefovir and Entecavir. In terms of biological role, multifunctional enzyme that converts the viral RNA genome into dsDNA in viral cytoplasmic capsids. This enzyme displays a DNA polymerase activity that can copy either DNA or RNA templates, and a ribonuclease H (RNase H) activity that cleaves the RNA strand of RNA-DNA heteroduplexes in a partially processive 3'- to 5'-endonucleasic mode. Neo-synthesized pregenomic RNA (pgRNA) are encapsidated together with the P protein, and reverse-transcribed inside the nucleocapsid. Initiation of reverse-transcription occurs first by binding the epsilon loop on the pgRNA genome, and is initiated by protein priming, thereby the 5'-end of (-)DNA is covalently linked to P protein. Partial (+)DNA is synthesized from the (-)DNA template and generates the relaxed circular DNA (RC-DNA) genome. After budding and infection, the RC-DNA migrates in the nucleus, and is converted into a plasmid-like covalently closed circular DNA (cccDNA). The activity of P protein does not seem to be necessary for cccDNA generation, and is presumably released from (+)DNA by host nuclear DNA repair machinery. The sequence is that of Protein P from Hepatitis B virus genotype C subtype ad (isolate Japan/S-179/1988) (HBV-C).